We begin with the raw amino-acid sequence, 317 residues long: COP9 signalosome complex subunit 6a (317 aa).

The MPN domain maps to Thr30–Val164.

It belongs to the peptidase M67A family. CSN6 subfamily. In terms of assembly, component of the CSN complex, probably composed of CSN1, CSN2, CSN3, CSN4, CSN5 (CSN5A or CSN5B), CSN6 (CSN6A or CSN6B), CSN7 and CSN8. Interacts with itself. In the complex, it probably interacts directly with CSN4 and CSN5A or CSN5B. Interacts with CSN7 (via C-terminal tail). Binds to the translation initiation factors TIF3E1.

The protein localises to the cytoplasm. It is found in the nucleus. In terms of biological role, component of the COP9 signalosome complex (CSN), a complex involved in various cellular and developmental processes such as photomorphogenesis and auxin and jasmonate responses. The CSN complex is an essential regulator of the ubiquitin (Ubl) conjugation pathway by mediating the deneddylation of the cullin subunits of SCF-type E3 ligase complexes, leading to decrease the Ubl ligase activity of SCF. It is involved in repression of photomorphogenesis in darkness by regulating the activity of COP1-containing Ubl ligase complexes. The complex is also required for degradation of PSIAA6 by regulating the activity of the Ubl ligase SCF-TIR complex. Essential for the structural integrity of the CSN holocomplex. The chain is COP9 signalosome complex subunit 6a from Arabidopsis thaliana (Mouse-ear cress).